We begin with the raw amino-acid sequence, 575 residues long: Stage VI sporulation protein D (575 aa).

The disordered stretch occupies residues 159–502; it reads EELSEPPAHS…ETKEPQTKES (344 aa). Residues 200-212 show a composition bias toward basic and acidic residues; that stretch reads GLREELETEKAES. 2 stretches are compositionally biased toward acidic residues: residues 229–238 and 249–264; these read KEEEESEELA and ETEESEPEPDPSEIEI. 3 stretches are compositionally biased toward basic and acidic residues: residues 266 to 275, 283 to 302, and 310 to 325; these read EIVKAKKETA, DVREEADSPAETELREHVGA, and AELHSETVIAKEKEET. The segment covering 438–448 has biased composition (acidic residues); it reads EEEEQEEESFE. Positions 449 to 464 are enriched in basic and acidic residues; it reads IEVRKTPSAEEPKEET. Residues 465–474 show a composition bias toward polar residues; that stretch reads PFQSFQLPES. The segment covering 493 to 502 has biased composition (basic and acidic residues); sequence ETKEPQTKES. In terms of domain architecture, LysM spans 523-567; that stretch reads KICIVQQEDTIERLCERYEITSQQLIRMNSLALDDELKAGQILYI.

In terms of biological role, required for assembly of a normal spore coat. May be a component of the innermost layer of the spore coat that aids in its adherence to the prespore. The protein is Stage VI sporulation protein D (spoVID) of Bacillus subtilis (strain 168).